The primary structure comprises 304 residues: Olfactory receptor 4K13 (304 aa).

At M1–I25 the chain is on the extracellular side. N5 is a glycosylation site (N-linked (GlcNAc...) asparagine). Residues L26 to V49 traverse the membrane as a helical segment. Residues T50–T57 lie on the Cytoplasmic side of the membrane. A helical membrane pass occupies residues P58–P79. Residues K80–Q100 lie on the Extracellular side of the membrane. C97 and C189 are disulfide-bonded. Residues M101–I120 form a helical membrane-spanning segment. Over D121–R139 the chain is Cytoplasmic. The chain crosses the membrane as a helical span at residues V140–S158. The Extracellular segment spans residues Q159–L195. Residues Q196 to G219 form a helical membrane-spanning segment. At V220–K235 the chain is on the cytoplasmic side. A helical transmembrane segment spans residues A236–Y258. Residues V259–K269 are Extracellular-facing. The helical transmembrane segment at I270 to L289 threads the bilayer. Residues R290 to I304 are Cytoplasmic-facing.

It belongs to the G-protein coupled receptor 1 family.

Its subcellular location is the cell membrane. Functionally, odorant receptor. The protein is Olfactory receptor 4K13 (OR4K13) of Homo sapiens (Human).